A 257-amino-acid polypeptide reads, in one-letter code: MDRIIEKLDRGWWVVSHEQKLWLPGGELPHGEAVNFDLVGQHALHIGEWQGESVWMVRQDRRHDMGSLRQVLDQDPGLFQLAGRGIQLAEFYRSHKFCGYCGHPMHASKSEWAMLCSHCRERYYPQIAPCIIVAIRRDDSILLAQHTRHRNGVHTVLAGFVEVGETLEQAVAREVMEESGIKVKNLRYVTSQPWPFPQSLMTAFMADYADGDIVVDKKELLTADWYRYDNLPLLPPPGTVARRLIEDTVAMCRAEFE.

Position 69 (Arg-69) interacts with substrate. Residues Cys-98 and Cys-101 each coordinate Zn(2+). Glu-111 lines the substrate pocket. The Zn(2+) site is built by Cys-116 and Cys-119. Tyr-124 contacts substrate. The region spanning 125-248 is the Nudix hydrolase domain; sequence PQIAPCIIVA…TVARRLIEDT (124 aa). A divalent metal cation is bound by residues Ala-158, Glu-174, and Glu-178. The Nudix box signature appears at 159-180; that stretch reads GFVEVGETLEQAVAREVMEESG. 192 to 199 lines the substrate pocket; sequence QPWPFPQS. Position 219 (Glu-219) interacts with a divalent metal cation. Ala-241 is a substrate binding site.

The protein belongs to the Nudix hydrolase family. NudC subfamily. In terms of assembly, homodimer. Mg(2+) serves as cofactor. Requires Mn(2+) as cofactor. The cofactor is Zn(2+).

The catalysed reaction is a 5'-end NAD(+)-phospho-ribonucleoside in mRNA + H2O = a 5'-end phospho-adenosine-phospho-ribonucleoside in mRNA + beta-nicotinamide D-ribonucleotide + 2 H(+). The enzyme catalyses NAD(+) + H2O = beta-nicotinamide D-ribonucleotide + AMP + 2 H(+). It catalyses the reaction NADH + H2O = reduced beta-nicotinamide D-ribonucleotide + AMP + 2 H(+). Its function is as follows. mRNA decapping enzyme that specifically removes the nicotinamide adenine dinucleotide (NAD) cap from a subset of mRNAs by hydrolyzing the diphosphate linkage to produce nicotinamide mononucleotide (NMN) and 5' monophosphate mRNA. The NAD-cap is present at the 5'-end of some mRNAs and stabilizes RNA against 5'-processing. Has preference for mRNAs with a 5'-end purine. Catalyzes the hydrolysis of a broad range of dinucleotide pyrophosphates. This chain is NAD-capped RNA hydrolase NudC, found in Klebsiella pneumoniae (strain 342).